The chain runs to 644 residues: MMDGFAQDWPTLTHTDNGLAMDQLSGVVGGGDLPGDVGFEPQTRARSNTWPCPRPENFVEPPDELDSTKASNQQLAAGDSQQAIQNANAAKKNSSRRNAWGNLSYADLITHAIGSATDKRLTLSQIYEWMVQNVPYFKDKGDSNSSAGWKNSIRHNLSLHNRFMRVQNEGTGKSSWWMLNPEAKPGKSVRRRAASMETSRYEKRRGRAKKRVEALRQAGVVGLNDATPSPSSSVSEGLDHFPESPLHSGGGFQLSPDFRQRASSNASSCGRLSPIRAQDLEPQDLWGFPVDYQNTTMTQAHAQALEELTGSMADELTLCNQQQQQQQQQQQQQQQQQQQQGFSAASGLPSQPPPPPYQPPQLQQQQQQQPSYSLNGPAPGGYQTLQPQSQSQCLLHRSLNCSCLHNARDGLSPNSVTTTMSPAYPNSEPSSDSLNTYSNVVLDGSSDLLVQQQQQQQLQQQQVKVEFEGQCLEVLNNEAQPIDEFNLENFPVGNLECNVEELLQQEMSYDGLLDINIPLANVSTNAPLVNLVNNSTTLSSSSSNLSGSTTTLSSSSLSAAVQLNQLQAQLQQQQQQQQQHLQQQQQHHQHQQQLLLNNNNNNNNNNSSNSSLDLATQTAATNLNAARVQYSQPSVVTSPPSWVH.

The tract at residues 39-75 is disordered; it reads FEPQTRARSNTWPCPRPENFVEPPDELDSTKASNQQL. At T49 the chain carries Phosphothreonine; by PKB/AKT1. Position 80 is a phosphoserine (S80). Positions 100–206 form a DNA-binding region, fork-head; sequence WGNLSYADLI…ETSRYEKRRG (107 aa). Disordered regions lie at residues 187–210, 222–276, 329–386, 412–435, and 578–612; these read KSVR…RAKK, GLND…SPIR, QQQQ…QTLQ, SPNS…DSLN, and QQHL…NSSL. Phosphoserine; by PKB/AKT1 is present on S195. Polar residues-rich tracts occupy residues 226-235 and 261-270; these read ATPSPSSSVS and RASSNASSCG. A Phosphoserine; by PKB/AKT1 modification is found at S264. Residues S267, S268, and S273 each carry the phosphoserine modification. Residues 329–340 show a composition bias toward low complexity; that stretch reads QQQQQQQQQQQQ. The segment covering 350-359 has biased composition (pro residues); the sequence is SQPPPPPYQP. Low complexity predominate over residues 360 to 374; it reads PQLQQQQQQQPSYSL. A compositionally biased stretch (polar residues) spans 412 to 421; the sequence is SPNSVTTTMS.

As to quaternary structure, interacts with melt.

The protein localises to the cytoplasm. Its subcellular location is the nucleus. In terms of biological role, transcription factor involved in the regulation of the insulin signaling pathway. Consistently activates both the downstream target Thor\d4EBP and the feedback control target InR. Involved in negative regulation of the cell cycle, modulating cell growth and proliferation. In response to cellular stresses, such as nutrient deprivation or increased levels of reactive oxygen species, foxo is activated and inhibits growth through the action of target genes such as Thor. Foxo activated in the adult fat body can regulate lifespan in adults; an insulin peptide itself may function as one secondary messenger of insulin-regulated aging. Also regulates Lip4, homolog of human acid lipases, thereby acting as a key modulator of lipid metabolism by insulin signaling and integrates insulin responses to glucose and lipid homeostasis. The sequence is that of Forkhead box protein O from Drosophila pseudoobscura pseudoobscura (Fruit fly).